A 249-amino-acid chain; its full sequence is Probable septum site-determining protein MinC (249 aa).

Positions Pro115–Arg144 are disordered. The segment covering Val118–Arg139 has biased composition (pro residues).

The protein belongs to the MinC family. As to quaternary structure, interacts with MinD and FtsZ.

Functionally, cell division inhibitor that blocks the formation of polar Z ring septums. Rapidly oscillates between the poles of the cell to destabilize FtsZ filaments that have formed before they mature into polar Z rings. Prevents FtsZ polymerization. This Xanthomonas axonopodis pv. citri (strain 306) protein is Probable septum site-determining protein MinC.